We begin with the raw amino-acid sequence, 885 residues long: Leucine--tRNA ligase (885 aa).

The 'HIGH' region signature appears at 48–58 (PYPSGKLHMGH). A 'KMSKS' region motif is present at residues 639 to 643 (TMSKS). Lys642 provides a ligand contact to ATP.

The protein belongs to the class-I aminoacyl-tRNA synthetase family.

The protein resides in the cytoplasm. The catalysed reaction is tRNA(Leu) + L-leucine + ATP = L-leucyl-tRNA(Leu) + AMP + diphosphate. The protein is Leucine--tRNA ligase of Bordetella petrii (strain ATCC BAA-461 / DSM 12804 / CCUG 43448).